Reading from the N-terminus, the 238-residue chain is Phosphoribosylaminoimidazole-succinocarboxamide synthase (238 aa).

Belongs to the SAICAR synthetase family.

It catalyses the reaction 5-amino-1-(5-phospho-D-ribosyl)imidazole-4-carboxylate + L-aspartate + ATP = (2S)-2-[5-amino-1-(5-phospho-beta-D-ribosyl)imidazole-4-carboxamido]succinate + ADP + phosphate + 2 H(+). Its pathway is purine metabolism; IMP biosynthesis via de novo pathway; 5-amino-1-(5-phospho-D-ribosyl)imidazole-4-carboxamide from 5-amino-1-(5-phospho-D-ribosyl)imidazole-4-carboxylate: step 1/2. The polypeptide is Phosphoribosylaminoimidazole-succinocarboxamide synthase (Chlorobium phaeovibrioides (strain DSM 265 / 1930) (Prosthecochloris vibrioformis (strain DSM 265))).